Here is a 7094-residue protein sequence, read N- to C-terminus: Replicase polyprotein 1ab (7094 aa).

The 143-residue stretch at 54–196 folds into the CoV Nsp1 globular domain; that stretch reads PENHVMVDCR…PWVMYLRKCG (143 aa). The BetaCoV Nsp1 C-terminal domain maps to 216 to 246; it reads FKVEDAYDLVHDEPKGKFSKKAYALIRGYRG. A CoV Nsp2 N-terminal domain is found at 250–519; the sequence is LLYVDQYGCD…LICKALYLDY (270 aa). Residues Cys-392, Cys-397, Cys-413, and Cys-416 each coordinate Zn(2+). The interval 392–416 is C4; it reads CEQDLCDFKGWVPGNMIDGFACTTC. One can recognise a CoV Nsp2 middle domain in the interval 524–713; that stretch reads CGNLHQRELL…AQAFRSVAKV (190 aa). A CoV Nsp2 C-terminal domain is found at 733–851; the sequence is RRRICLSGSK…LDQAWRVPCA (119 aa). The 114-residue stretch at 853–966 folds into the Ubiquitin-like 1 domain; sequence RCVTFKEQPT…LYCAFTAPED (114 aa). The span at 972 to 986 shows a compositional bias: acidic residues; that stretch reads ESGVEEDDVEGEETD. A disordered region spans residues 972 to 992; that stretch reads ESGVEEDDVEGEETDLTVTSA. The Peptidase C16 1 domain maps to 1036 to 1274; it reads DLESVIQDYE…IAQLYGSCIT (239 aa). The active-site For PL1-PRO activity is Cys-1074. 4 residues coordinate Zn(2+): Cys-1151, Cys-1154, Cys-1177, and Cys-1179. A C4-type 1 zinc finger spans residues 1151–1179; it reads CIKCDLALKLKGLDAMFFYGDVVSHVCKC. Catalysis depends on for PL1-PRO activity residues His-1225 and Asp-1236. The 161-residue stretch at 1275 to 1435 folds into the Macro domain; sequence PNVCFVKGDI…LISKCQITAV (161 aa). One can recognise a DPUP domain in the interval 1491–1563; the sequence is DDARTFVQSN…VAQIKALFLD (73 aa). Residues 1562 to 1617 form the Ubiquitin-like 2 domain; sequence LDKVDILLTVDGVNFTNRFVPVGESFGKSLGNVFCDGVNVTKHKCDINYKGKVFFQ. Residues 1631–1892 form the Peptidase C16 2 domain; it reads SSFNFDQKEL…KIEYKPDLSQ (262 aa). Cys-1671 serves as the catalytic For PL2-PRO activity. Residues Cys-1749, Cys-1751, Cys-1783, and Cys-1785 each contribute to the Zn(2+) site. The C4-type 2 zinc-finger motif lies at 1749–1785; that stretch reads CKCGVKQEQRTGVDAVMHFGTLSREDLEIGYTVDCSC. Catalysis depends on for PL2-PRO activity residues His-1828 and Asp-1842. The 102-residue stretch at 1906–2007 folds into the Nucleic acid-binding domain; the sequence is IKAQFKTFEK…TYFNRPLLVD (102 aa). One can recognise a G2M domain in the interval 2020–2169; sequence DDGGDISESD…ADNKVIYTTE (150 aa). The next 3 membrane-spanning stretches (helical) occupy residues 2138–2158, 2199–2219, and 2221–2241; these read ISACFNFIKWLFVLLFGWIKI, ACIIATIFLLWFNFIYANVIF, and DFYLPKIGFLPTFVGKIAQWI. Positions 2138 to 2385 are HD1; the sequence is ISACFNFIKW…ASFIKLFSLF (248 aa). Residues 2235-2296 enclose the 3Ecto domain; the sequence is GKIAQWIKNT…AIDVVQYEAD (62 aa). Cystine bridges form between Cys-2251–Cys-2275 and Cys-2266–Cys-2272. The next 3 membrane-spanning stretches (helical) occupy residues 2313–2333, 2343–2363, and 2365–2385; these read LIVSYALYTAWFYPLFALISI, LFMLSTLHWSVRLLVSLANML, and AHVFMRFYIIIASFIKLFSLF. Residues 2383 to 2473 are Y1; that stretch reads SLFRHVAYGC…ELKRPIQPTD (91 aa). The region spanning 2383-2750 is the CoV Nsp3 Y domain; that stretch reads SLFRHVAYGC…LTTPFSLKGG (368 aa). Zn(2+) is bound by residues His-2387, Cys-2392, Cys-2397, Cys-2400, Cys-2433, His-2436, Cys-2440, and Cys-2443. The segment at 2387-2400 is ZF1; that stretch reads HVAYGCSKSGCLFC. The segment at 2433-2443 is ZF2; that stretch reads CSKHQWNCIDC. The Y2 stretch occupies residues 2474–2566; sequence VAYHTVTDVK…MVDKNLITTA (93 aa). The interval 2474 to 2750 is coV-Y; that stretch reads VAYHTVTDVK…LTTPFSLKGG (277 aa). Residues 2567–2649 form a Y3 region; sequence NTGTSVTETM…DSVMSAVSAG (83 aa). Positions 2650-2750 are Y4; sequence LELTDESCNN…LTTPFSLKGG (101 aa). Helical transmembrane passes span 2752–2772, 3031–3051, 3063–3083, 3090–3110, and 3115–3135; these read VFSYFVYVCFVLSLVCFIGLW, ASSIAGAILAVIVVLVFYYLI, IVFVNVIVWCVNFMMLFVFQV, VYAICYFYATLYFPSEISVIM, and LVMYGTIMPLWFCLLYISVVV. An HD2 region spans residues 2752–3135; that stretch reads VFSYFVYVCF…FCLLYISVVV (384 aa). The Nsp4C domain occupies 3149–3246; that stretch reads LGTSVRSDGT…TASVSTSFLQ (98 aa). The Peptidase C30 domain occupies 3247 to 3549; the sequence is SGIVKMVNPT…YQQLAGIKLQ (303 aa). Residues His-3287 and Cys-3391 each act as for 3CL-PRO activity in the active site. 7 consecutive transmembrane segments (helical) span residues 3558 to 3578, 3588 to 3608, 3615 to 3635, 3657 to 3677, 3684 to 3704, 3711 to 3731, and 3755 to 3775; these read GIVCWIMASTFLFSCIITAFV, TNMLSITFCALCVISLTMLLV, LTMYIIPVLFTLLYNNYLVVY, TYTDEVIYGMLLLIGMVFVTL, LFSFIMFVGRVISVVSLWYMG, ILLMLASLFGTYTWTTALSMA, and IVLVCYLFIGYIISCYWGLFS. The interval 3558-3775 is HD3; it reads GIVCWIMAST…IISCYWGLFS (218 aa). A RdRp Nsp7 cofactor domain is found at 3837–3925; that stretch reads SKLTDVKCAN…DYAKDNTVLQ (89 aa). The 197-residue stretch at 3926 to 4122 folds into the RdRp Nsp8 cofactor domain; sequence ALQSEFVNMA…HNEVSATALQ (197 aa). A Nsp9 ssRNA-binding domain is found at 4123-4232; the sequence is NNELMPAKLK…GTISSTVRLQ (110 aa). The 138-residue stretch at 4233 to 4370 folds into the ExoN/MTase coactivator domain; the sequence is AGTATEYASN…CVSTDTTVQS (138 aa). Zn(2+)-binding residues include Cys-4306, Cys-4309, His-4315, Cys-4322, Cys-4348, Cys-4351, Cys-4359, and Cys-4361. Zinc fingers lie at residues 4306–4322 and 4348–4361; these read CIYCRARVEHPDVDGLC and CQVCGFWRDGSCSC. The NiRAN domain occupies 4375 to 4630; the sequence is FLNRVRGTSV…DCELYVNNAY (256 aa). Mn(2+) contacts are provided by Asn-4578 and Asp-4587. The 99-residue stretch at 4631-4729 folds into the Nsp12 Interface domain; the sequence is RLFDLVQYDF…MNMDVDTHRY (99 aa). Zn(2+) contacts are provided by His-4660, Cys-4666, Cys-4671, Cys-4675, and Cys-4852. In terms of domain architecture, Nsp12 RNA-dependent RNA polymerase spans 4730-5297; sequence RLSLKDLLLY…NMYLRSAVMQ (568 aa). The segment at 4732–4946 is rdRp Fingers N-ter; that stretch reads SLKDLLLYAA…HQKCLKSIAA (215 aa). The rdRp Palm N-ter stretch occupies residues 4947–4985; the sequence is TRGVPVVIGTTKFYGGWDDMLRRLIKDVDNPVLMGWDYP. Residues 4977 to 5139 enclose the RdRp catalytic domain; the sequence is PVLMGWDYPK…CYNSDYASKG (163 aa). A rdRp Fingers C-ter region spans residues 4986–5044; sequence KCDRAMPNILRIVSSLVLARKHEACCSQSDRFYRLANEYAQVLSEIVMCGGCYYVKPGG. His-5007, Cys-5010, and Cys-5011 together coordinate Zn(2+). The rdRp Palm C-ter stretch occupies residues 5045 to 5180; that stretch reads TSSGDATTAF…NNGPHEFCSQ (136 aa). Catalysis depends on residues Ser-5124, Asp-5125, and Asp-5126. Residues 5181–5297 are rdRp Thumb; the sequence is HTMLVKMDGD…NMYLRSAVMQ (117 aa). One can recognise a CV ZBD domain in the interval 5298 to 5410; sequence SVGACVVCSS…DDFNRIASCK (113 aa). The Zn(2+) site is built by Cys-5302, Cys-5305, Cys-5313, Cys-5316, Cys-5323, Cys-5326, His-5330, His-5336, Cys-5347, Cys-5352, Cys-5369, and His-5372. Positions 5553 to 5734 constitute a (+)RNA virus helicase ATP-binding domain; the sequence is SVLETFQNNV…MCCLGPDIFL (182 aa). An ATP-binding site is contributed by 5578 to 5585; it reads GPPGTGKS. Positions 5735 to 5904 constitute a (+)RNA virus helicase C-terminal domain; the sequence is GTCYRCPKEI…VETRVQCSTN (170 aa). Residues 5971-6186 form the ExoN domain; sequence LFITKEEAVK…RCLAVYDCFC (216 aa). Active-site residues include Asp-5989, Glu-5991, and Glu-6090. Zn(2+) contacts are provided by Cys-6106, Cys-6109, Cys-6125, His-6128, His-6156, Cys-6160, and His-6163. Residues His-6167 and Asp-6172 contribute to the active site. Cys-6178 contacts Zn(2+). Positions 6195–6421 constitute an N7-MTase domain; it reads YPIISNELSI…NLWNTFTKLQ (227 aa). 6230–6236 is an S-adenosyl-L-methionine binding site; the sequence is DIGNPKA. The segment at 6308-6322 is gpppA-binding; that stretch reads CNGGSLYVNKHAFHT. Zn(2+) contacts are provided by Cys-6346, Cys-6367, Cys-6378, and His-6381. Residues 6422–6482 enclose the Nsp15 N-terminal oligomerization domain; that stretch reads SLENVVYNLV…NVAVELFAKR (61 aa). The region spanning 6483-6603 is the AV-Nsp11N/CoV-Nsp15M domain; the sequence is SIRHHPELKL…FAVRKEGQDV (121 aa). The region spanning 6653–6792 is the NendoU domain; that stretch reads TCRTDMEKDF…NDEKVMTFYL (140 aa). Catalysis depends on residues His-6683, His-6698, Lys-6738, Lys-6841, Asp-6925, Lys-6965, and Glu-6998. The 295-residue stretch at 6797–7091 folds into the Nidovirus-type SAM-dependent 2'-O-MTase domain; it reads ASDWKPGYSM…KEVFVGDSMV (295 aa).

Belongs to the coronaviruses polyprotein 1ab family. In terms of assembly, interacts with host PHB and PHB2. Interacts with papain-like protease nsp3 and non-structural protein 6. As to quaternary structure, monomer. Homodimer. Only the homodimer shows catalytic activity. In terms of assembly, interacts with nsp8 and nsp12 to form the replication-transcription complex (RTC): nsp12, nsp7, two subunits of nsp8, and up to two subunits of nsp13. Interacts with nsp7, nsp13 and nsp12 to form the replication-transcription complex (RTC): nsp12, nsp7, two subunits of nsp8, and up to two subunits of nsp13. As to quaternary structure, interacts with nsp12. In terms of assembly, interacts with proofreading exoribonuclease nsp14 and 2'-O-methyltransferase nsp16; these interactions enhance nsp14 and nsp16 enzymatic activities. Interacts with nsp7 and nsp8 to form the replication-transcription complex (RTC): nsp12, nsp7, two subunits of nsp8, and up to two subunits of nsp13. Interacts with nsp9. As to quaternary structure, interacts with nsp8 to form the replication-transcription complex (RTC): nsp12, nsp7, two subunits of nsp8, and up to two subunits of nsp13. Mn(2+) is required as a cofactor. Mg(2+) serves as cofactor. Post-translationally, specific enzymatic cleavages in vivo by its own proteases yield mature proteins. 3CL-PRO and PL-PRO proteinases are autocatalytically processed.

Its subcellular location is the host membrane. It is found in the host cytoplasm. The protein resides in the host perinuclear region. It localises to the host endoplasmic reticulum-Golgi intermediate compartment. It carries out the reaction RNA(n) + a ribonucleoside 5'-triphosphate = RNA(n+1) + diphosphate. The enzyme catalyses ATP + H2O = ADP + phosphate + H(+). It catalyses the reaction Thiol-dependent hydrolysis of ester, thioester, amide, peptide and isopeptide bonds formed by the C-terminal Gly of ubiquitin (a 76-residue protein attached to proteins as an intracellular targeting signal).. The catalysed reaction is a 5'-end (N(7)-methyl 5'-triphosphoguanosine)-ribonucleoside in mRNA + S-adenosyl-L-methionine = a 5'-end (N(7)-methyl 5'-triphosphoguanosine)-(2'-O-methyl-ribonucleoside) in mRNA + S-adenosyl-L-homocysteine + H(+). It carries out the reaction uridylyl-uridylyl-ribonucleotide-RNA = a 3'-end uridylyl-2',3'-cyclophospho-uridine-RNA + a 5'-end dephospho-ribonucleoside-RNA. The enzyme catalyses a 5'-end diphospho-ribonucleoside in mRNA + GTP + H(+) = a 5'-end (5'-triphosphoguanosine)-ribonucleoside in mRNA + diphosphate. It catalyses the reaction a 5'-end (5'-triphosphoguanosine)-ribonucleoside in mRNA + S-adenosyl-L-methionine = a 5'-end (N(7)-methyl 5'-triphosphoguanosine)-ribonucleoside in mRNA + S-adenosyl-L-homocysteine. Functionally, the replicase polyprotein of coronaviruses is a multifunctional protein: it contains the activities necessary for the transcription of negative stranded RNA, leader RNA, subgenomic mRNAs and progeny virion RNA as well as proteinases responsible for the cleavage of the polyprotein into functional products. In terms of biological role, inhibits host translation by interacting with the 40S ribosomal subunit. The nsp1-40S ribosome complex further induces an endonucleolytic cleavage near the 5'UTR of host mRNAs, targeting them for degradation. Viral mRNAs are not susceptible to nsp1-mediated endonucleolytic RNA cleavage thanks to the presence of a 5'-end leader sequence and are therefore protected from degradation. By suppressing host gene expression, nsp1 facilitates efficient viral gene expression in infected cells and evasion from host immune response. Its function is as follows. May play a role in the modulation of host cell survival signaling pathway by interacting with host PHB and PHB2. Indeed, these two proteins play a role in maintaining the functional integrity of the mitochondria and protecting cells from various stresses. Responsible for the cleavages located at the N-terminus of the replicase polyprotein. In addition, PL-PRO possesses a deubiquitinating/deISGylating activity and processes both 'Lys-48'- and 'Lys-63'-linked polyubiquitin chains from cellular substrates. Participates together with nsp4 in the assembly of virally-induced cytoplasmic double-membrane vesicles necessary for viral replication. Antagonizes innate immune induction of type I interferon by blocking the phosphorylation, dimerization and subsequent nuclear translocation of host IRF3. Also prevents host NF-kappa-B signaling. Functionally, participates in the assembly of virally-induced cytoplasmic double-membrane vesicles necessary for viral replication. In terms of biological role, cleaves the C-terminus of replicase polyprotein at 11 sites. Recognizes substrates containing the core sequence [ILMVF]-Q-|-[SGACN]. Also able to bind an ADP-ribose-1''-phosphate (ADRP). Its function is as follows. Plays a role in the initial induction of autophagosomes from host endoplasmic reticulum. Later, limits the expansion of these phagosomes that are no longer able to deliver viral components to lysosomes. Forms a hexadecamer with nsp8 (8 subunits of each) that may participate in viral replication by acting as a primase. Alternatively, may synthesize substantially longer products than oligonucleotide primers. Functionally, forms a hexadecamer with nsp7 (8 subunits of each) that may participate in viral replication by acting as a primase. Alternatively, may synthesize substantially longer products than oligonucleotide primers. In terms of biological role, forms a primer, NSP9-pU, which is utilized by the polymerase for the initiation of RNA chains. Interacts with ribosome signal recognition particle RNA (SRP). Together with NSP8, suppress protein integration into the cell membrane, thereby disrupting host immune defenses. Its function is as follows. Plays a pivotal role in viral transcription by stimulating both nsp14 3'-5' exoribonuclease and nsp16 2'-O-methyltransferase activities. Therefore plays an essential role in viral mRNAs cap methylation. RNA-directed RNA polymerase that catalyzes the transcription of viral genomic and subgenomic RNAs. Acts in complex with nsp7 and nsp8 to transcribe both the minus and positive strands of genomic RNA. The kinase-like NiRAN domain of NSP12 attaches one or more nucleotides to the amino terminus of NSP9, forming a covalent RNA-protein intermediate that serves as transcription/replication primer. Subgenomic RNAs (sgRNAs) are formed by discontinuous transcription: The polymerase has the ability to pause at transcription-regulating sequences (TRS) and jump to the leader TRS, resulting in a major deletion. This creates a series of subgenomic RNAs that are replicated, transcribed and translated. In addition, Nsp12 is a subunit of the viral RNA capping enzyme that catalyzes the RNA guanylyltransferase reaction for genomic and sub-genomic RNAs. Subsequently, the NiRAN domain transfers RNA to GDP, and forms the core cap structure GpppA-RNA. Functionally, multi-functional protein with a zinc-binding domain in N-terminus displaying RNA and DNA duplex-unwinding activities with 5' to 3' polarity. Activity of helicase is dependent on magnesium. In terms of biological role, plays a role in viral RNA synthesis through two distinct activities. The N7-guanine methyltransferase activity plays a role in the formation of the cap structure GpppA-RNA. The proofreading exoribonuclease reduces the sensitivity of the virus to RNA mutagens during replication. This activity acts on both ssRNA and dsRNA in a 3'-5' direction. Its function is as follows. Plays a role in viral transcription/replication and prevents the simultaneous activation of host cell dsRNA sensors, such as MDA5/IFIH1, OAS, and PKR. Acts by degrading the 5'-polyuridines generated during replication of the poly(A) region of viral genomic and subgenomic RNAs. Catalyzes a two-step reaction in which a 2'3'-cyclic phosphate (2'3'-cP) is first generated by 2'-O transesterification, which is then hydrolyzed to a 3'-phosphate (3'-P). If not degraded, poly(U) RNA would hybridize with poly(A) RNA tails and activate host dsRNA sensors. Methyltransferase that mediates mRNA cap 2'-O-ribose methylation to the 5'-cap structure of viral mRNAs. N7-methyl guanosine cap is a prerequisite for binding of nsp16. Therefore plays an essential role in viral mRNAs cap methylation which is essential to evade immune system. In Bos taurus (Bovine), this protein is Replicase polyprotein 1ab (rep).